We begin with the raw amino-acid sequence, 629 residues long: Interleukin-23 receptor (629 aa).

Positions 1–23 are cleaved as a signal peptide; it reads MNQVTIQWDAVIALYILFSWCHG. The Extracellular portion of the chain corresponds to 24–355; that stretch reads GITNINCSGH…LTSDNRGDIG (332 aa). The N-linked (GlcNAc...) asparagine; partial glycan is linked to Asn-29. 3 N-linked (GlcNAc...) asparagine glycosylation sites follow: Asn-47, Asn-81, and Asn-141. 2 consecutive Fibronectin type-III domains span residues 127–217 and 219–318; these read IPDE…LDDI and IPSA…TPET. Residue Asn-180 is glycosylated (N-linked (GlcNAc...) (high mannose) asparagine). 2 N-linked (GlcNAc...) asparagine glycosylation sites follow: Asn-232 and Asn-262. N-linked (GlcNAc...) asparagine; partial glycosylation is present at Asn-273. The chain crosses the membrane as a helical span at residues 356–376; it reads LLLGMIVFAVMLSILSLIGIF. At 377-629 the chain is on the cytoplasmic side; the sequence is NRSFRTGIKR…HFNRISLLEK (253 aa).

The protein belongs to the type I cytokine receptor family. Type 2 subfamily. As to quaternary structure, heterodimer with IL12RB1. In presence of IL23, the heterodimer forms the IL23 receptor. Interacts with JAK2 and in presence of IL23 with STAT3. Post-translationally, phosphorylated in response to IL23. In terms of tissue distribution, expressed by monocytes, Th1, Th0, NK and dendritic cells. Isoform 1 is specifically expressed in NK cells.

It localises to the cell membrane. Associates with IL12RB1 to form the interleukin-23 receptor. Binds IL23 and mediates T-cells, NK cells and possibly certain macrophage/myeloid cells stimulation probably through activation of the Jak-Stat signaling cascade. IL23 functions in innate and adaptive immunity and may participate in acute response to infection in peripheral tissues. IL23 may be responsible for autoimmune inflammatory diseases and be important for tumorigenesis. The polypeptide is Interleukin-23 receptor (IL23R) (Homo sapiens (Human)).